The sequence spans 307 residues: Undecaprenyl-diphosphatase 2 (307 aa).

Helical transmembrane passes span 19 to 41 (GVTE…IIGF), 56 to 76 (IHMF…VLYW), 117 to 137 (FKFW…GLPF), 144 to 164 (LLFF…WMIF), 208 to 228 (IIGA…SFFL), 229 to 249 (AIPM…VVLS), 251 to 271 (VQIL…LVVV), and 285 to 305 (IFAV…FTKV).

This sequence belongs to the UppP family.

It localises to the cell membrane. The enzyme catalyses di-trans,octa-cis-undecaprenyl diphosphate + H2O = di-trans,octa-cis-undecaprenyl phosphate + phosphate + H(+). In terms of biological role, catalyzes the dephosphorylation of undecaprenyl diphosphate (UPP). Confers resistance to bacitracin. The polypeptide is Undecaprenyl-diphosphatase 2 (Clostridium acetobutylicum (strain ATCC 824 / DSM 792 / JCM 1419 / IAM 19013 / LMG 5710 / NBRC 13948 / NRRL B-527 / VKM B-1787 / 2291 / W)).